The primary structure comprises 405 residues: Caspase-1 (405 aa).

The region spanning 1 to 91 (MADKVLKEKR…HLAETLRLSS (91 aa)) is the CARD domain. Residues 1 to 119 (MADKVLKEKR…SSPALQAMPD (119 aa)) constitute a propeptide that is removed on maturation. Catalysis depends on residues His-238 and Cys-286. The propeptide occupies 299–317 (STGTSGNSSSLAPDDFEDD). Ser-303 is modified (phosphoserine).

It belongs to the peptidase C14A family. In terms of assembly, heterotetramer that consists of two anti-parallel arranged heterodimers, each one formed by a 20 kDa (Caspase-1 subunit p20) and a 10 kDa (Caspase-1 subunit p10) subunit. May be a component of the inflammasome, a protein complex which also includes PYCARD, CARD8 and NLRP2 and whose function would be the activation of pro-inflammatory caspases. Component of the AIM2 PANoptosome complex, a multiprotein complex that drives inflammatory cell death (PANoptosis). Both the p10 and p20 subunits interact with MEFV. Interacts with CARD17P/INCA and CARD18. Interacts with SERPINB1; this interaction regulates CASP1 activity. Heterotetramer that consists of two anti-parallel arranged heterodimers, each one formed by a 20 kDa (Caspase-1 subunit p20) and a 10 kDa (Caspase-1 subunit p10) subunit. Post-translationally, the two subunits are derived from the precursor sequence by an autocatalytic mechanism. In terms of processing, ubiquitinated via 'Lys-11'-linked polyubiquitination. Deubiquitinated by USP8.

It is found in the cytoplasm. The protein localises to the cell membrane. It carries out the reaction Strict requirement for an Asp residue at position P1 and has a preferred cleavage sequence of Tyr-Val-Ala-Asp-|-.. In terms of biological role, thiol protease involved in a variety of inflammatory processes by proteolytically cleaving other proteins, such as the precursors of the inflammatory cytokines interleukin-1 beta (IL1B) and interleukin 18 (IL18) as well as the pyroptosis inducer Gasdermin-D (GSDMD), into active mature peptides. Plays a key role in cell immunity as an inflammatory response initiator: once activated through formation of an inflammasome complex, it initiates a pro-inflammatory response through the cleavage of the two inflammatory cytokines IL1B and IL18, releasing the mature cytokines which are involved in a variety of inflammatory processes. Cleaves a tetrapeptide after an Asp residue at position P1. Also initiates pyroptosis, a programmed lytic cell death pathway, through cleavage of GSDMD. In contrast to cleavage of interleukin IL1B, recognition and cleavage of GSDMD is not strictly dependent on the consensus cleavage site but depends on an exosite interface on CASP1 that recognizes and binds the Gasdermin-D, C-terminal (GSDMD-CT) part. Cleaves and activates CASP7 in response to bacterial infection, promoting plasma membrane repair. Upon inflammasome activation, during DNA virus infection but not RNA virus challenge, controls antiviral immunity through the cleavage of CGAS, rendering it inactive. In apoptotic cells, cleaves SPHK2 which is released from cells and remains enzymatically active extracellularly. The chain is Caspase-1 (CASP1) from Equus caballus (Horse).